Reading from the N-terminus, the 689-residue chain is DNA-directed RNA polymerase subunit beta' (689 aa).

Zn(2+) contacts are provided by Cys69, Cys71, Cys87, and Cys90. Mg(2+) contacts are provided by Asp489, Asp491, and Asp493.

The protein belongs to the RNA polymerase beta' chain family. RpoC1 subfamily. In plastids the minimal PEP RNA polymerase catalytic core is composed of four subunits: alpha, beta, beta', and beta''. When a (nuclear-encoded) sigma factor is associated with the core the holoenzyme is formed, which can initiate transcription. Requires Mg(2+) as cofactor. It depends on Zn(2+) as a cofactor.

The protein resides in the plastid. It is found in the chloroplast. The enzyme catalyses RNA(n) + a ribonucleoside 5'-triphosphate = RNA(n+1) + diphosphate. Its function is as follows. DNA-dependent RNA polymerase catalyzes the transcription of DNA into RNA using the four ribonucleoside triphosphates as substrates. The polypeptide is DNA-directed RNA polymerase subunit beta' (Helianthus annuus (Common sunflower)).